Consider the following 80-residue polypeptide: MKKPLRQQNRQIISYVPRTEPAPPEHAIKMDSFRDVWMLRGKYVAFVLMGESFLRSPAFTVPESAQRWANQIRQEGEVTE.

Belongs to the CedA family.

Its function is as follows. Activates the cell division inhibited by chromosomal DNA over-replication. The sequence is that of Cell division activator CedA from Escherichia coli O139:H28 (strain E24377A / ETEC).